We begin with the raw amino-acid sequence, 37 residues long: Large ribosomal subunit protein bL36c (37 aa).

It belongs to the bacterial ribosomal protein bL36 family.

It is found in the plastid. It localises to the chloroplast. The protein is Large ribosomal subunit protein bL36c of Phaseolus angularis (Azuki bean).